A 178-amino-acid chain; its full sequence is Large ribosomal subunit protein uL6 (178 aa).

Belongs to the universal ribosomal protein uL6 family. As to quaternary structure, part of the 50S ribosomal subunit.

Its function is as follows. This protein binds to the 23S rRNA, and is important in its secondary structure. It is located near the subunit interface in the base of the L7/L12 stalk, and near the tRNA binding site of the peptidyltransferase center. The polypeptide is Large ribosomal subunit protein uL6 (Streptococcus equi subsp. zooepidemicus (strain H70)).